A 450-amino-acid chain; its full sequence is tRNA modification GTPase MnmE (450 aa).

(6S)-5-formyl-5,6,7,8-tetrahydrofolate is bound by residues arginine 23, glutamate 79, and lysine 118. Positions 214–374 (GITLILVGKP…LKEHILNKVG (161 aa)) constitute a TrmE-type G domain. Asparagine 224 provides a ligand contact to K(+). GTP contacts are provided by residues 224-229 (NAGKSS), 243-249 (TSIAGTT), and 268-271 (DTAG). Serine 228 is a binding site for Mg(2+). Positions 243, 245, and 248 each coordinate K(+). Threonine 249 serves as a coordination point for Mg(2+). Position 450 (lysine 450) interacts with (6S)-5-formyl-5,6,7,8-tetrahydrofolate.

Belongs to the TRAFAC class TrmE-Era-EngA-EngB-Septin-like GTPase superfamily. TrmE GTPase family. In terms of assembly, homodimer. Heterotetramer of two MnmE and two MnmG subunits. Requires K(+) as cofactor.

Its subcellular location is the cytoplasm. Functionally, exhibits a very high intrinsic GTPase hydrolysis rate. Involved in the addition of a carboxymethylaminomethyl (cmnm) group at the wobble position (U34) of certain tRNAs, forming tRNA-cmnm(5)s(2)U34. The protein is tRNA modification GTPase MnmE of Francisella tularensis subsp. holarctica (strain FTNF002-00 / FTA).